A 152-amino-acid chain; its full sequence is uncharacterized protein (152 aa).

N2 carries N-linked (GlcNAc...) asparagine; by host glycosylation. The next 3 helical transmembrane spans lie at 5-25 (MILLMVIASFVAGYLSTMNLW), 36-56 (LNDFYMVLLMVGWMIVMCYIL), and 68-88 (LIITITIIIIIVYAIRTQAFI). N-linked (GlcNAc...) asparagine; by host glycosylation is present at N113.

Its subcellular location is the membrane. This is an uncharacterized protein from Acanthamoeba polyphaga mimivirus (APMV).